The sequence spans 651 residues: J domain-containing protein required for chloroplast accumulation response 1 (651 aa).

Residues 1-17 (MQTLPSSETVLLGSNSA) are compositionally biased toward polar residues. Disordered stretches follow at residues 1–56 (MQTL…TRHS), 114–138 (GSRILSPAHKPESSSGTSSPSQFSL), 156–176 (LNKNKETVSSSPLSRTSSKAD), 250–291 (KLGK…TDLK), and 308–526 (KPLD…IDEP). Ser56 carries the phosphoserine modification. A compositionally biased stretch (low complexity) spans 126-137 (SSSGTSSPSQFS). Basic and acidic residues-rich tracts occupy residues 250 to 259 (KLGKNEEGDG), 281 to 291 (TKEEKTETDLK), 337 to 357 (IFHEEDERQDEKIVSEREVRK), 405 to 416 (VGKDGVKGKVSD), 441 to 456 (RAKETPKTDIIHDGSN), and 488 to 497 (QKKDSDRESM). Residues 532 to 562 (DVEDITQDENKMEEANKDAEEIKNIDAKIRK) adopt a coiled-coil conformation. Residues 586 to 651 (SGWKPVPLMD…WDHFNTLGPV (66 aa)) enclose the J domain.

As to expression, expressed in leaves and stems, but not in roots.

It localises to the cytoplasm. In terms of biological role, required for chloroplast photorelocation movement; chloroplast accumulation upon low blue light and for chloroplast movement to the bottom of cells in darkness, by modulating chloroplast actin (Cp-actin) filaments distribution, appearance and disappearance. May mediate a slight resistance to aluminum in root hair cells. The chain is J domain-containing protein required for chloroplast accumulation response 1 (JAC1) from Arabidopsis thaliana (Mouse-ear cress).